A 44-amino-acid chain; its full sequence is Hyaluronidase CdtHya1 (44 aa).

Belongs to the glycosyl hydrolase 56 family. Monomer. Post-translationally, contains disulfide bonds. In terms of processing, glycosylated. As to expression, expressed by the venom gland.

Its subcellular location is the secreted. The enzyme catalyses Random hydrolysis of (1-&gt;4)-linkages between N-acetyl-beta-D-glucosamine and D-glucuronate residues in hyaluronate.. Snake venom endo-hyaluronidase that degrades hyaluronan to smaller oligosaccharide fragments. In venom, it is not toxic by itself, but increases the diffusion of other venom proteins such as crotoxin (a neurotoxic and myotoxic PLA2) by degrading the extracellular matrix. In addition, it displays antiedematogenic activity, since it significantly diminishes the oedematogenic activity of crotoxin (probably by direct substrate hydrolysis, since hyaluronan possesses strong water-binding capacity). This chain is Hyaluronidase CdtHya1, found in Crotalus durissus terrificus (South American rattlesnake).